The following is a 456-amino-acid chain: tRNA-2-methylthio-N(6)-dimethylallyladenosine synthase (456 aa).

The region spanning 2–119 (KKVFIKTYGC…LPDLIAARRR (118 aa)) is the MTTase N-terminal domain. The [4Fe-4S] cluster site is built by Cys11, Cys48, Cys82, Cys156, Cys160, and Cys163. The region spanning 142 to 375 (RVDGASAYVS…QATIEENVAR (234 aa)) is the Radical SAM core domain. A TRAM domain is found at 378–448 (QGMVGSVQRI…PHSLRGEVAE (71 aa)).

Belongs to the methylthiotransferase family. MiaB subfamily. Monomer. The cofactor is [4Fe-4S] cluster.

Its subcellular location is the cytoplasm. The catalysed reaction is N(6)-dimethylallyladenosine(37) in tRNA + (sulfur carrier)-SH + AH2 + 2 S-adenosyl-L-methionine = 2-methylsulfanyl-N(6)-dimethylallyladenosine(37) in tRNA + (sulfur carrier)-H + 5'-deoxyadenosine + L-methionine + A + S-adenosyl-L-homocysteine + 2 H(+). Catalyzes the methylthiolation of N6-(dimethylallyl)adenosine (i(6)A), leading to the formation of 2-methylthio-N6-(dimethylallyl)adenosine (ms(2)i(6)A) at position 37 in tRNAs that read codons beginning with uridine. In Ralstonia pickettii (strain 12J), this protein is tRNA-2-methylthio-N(6)-dimethylallyladenosine synthase.